Here is a 427-residue protein sequence, read N- to C-terminus: Methylenetetrahydrofolate--tRNA-(uracil-5-)-methyltransferase TrmFO (427 aa).

An FAD-binding site is contributed by 6–11 (GAGLAG).

Belongs to the MnmG family. TrmFO subfamily. FAD is required as a cofactor.

It localises to the cytoplasm. The catalysed reaction is uridine(54) in tRNA + (6R)-5,10-methylene-5,6,7,8-tetrahydrofolate + NADH + H(+) = 5-methyluridine(54) in tRNA + (6S)-5,6,7,8-tetrahydrofolate + NAD(+). It catalyses the reaction uridine(54) in tRNA + (6R)-5,10-methylene-5,6,7,8-tetrahydrofolate + NADPH + H(+) = 5-methyluridine(54) in tRNA + (6S)-5,6,7,8-tetrahydrofolate + NADP(+). Its function is as follows. Catalyzes the folate-dependent formation of 5-methyl-uridine at position 54 (M-5-U54) in all tRNAs. This chain is Methylenetetrahydrofolate--tRNA-(uracil-5-)-methyltransferase TrmFO, found in Acholeplasma laidlawii (strain PG-8A).